A 3957-amino-acid polypeptide reads, in one-letter code: Ankyrin-2 (3957 aa).

The span at 1–14 (MMNEDAAQKSDSGE) shows a compositional bias: basic and acidic residues. The segment at 1–34 (MMNEDAAQKSDSGEKFNGSSQRRKRPKKSDSNAS) is disordered. 24 ANK repeats span residues 30–62 (DSNA…TCNQ), 63–92 (NGLN…SVDS), 96–125 (KGNT…NINA), 129–158 (NGFT…NQST), 162–191 (DGFT…KGKV), 193–220 (LPAL…NADV), 232–261 (SGFT…AVDF), 265–294 (NGIT…QIDA), 298–327 (DGLT…PLLA), 331–360 (NGLS…PVDD), 364–393 (DYLT…NPNA), 397–426 (NGFT…SIQA), 430–459 (SGLT…SPDV), 463–492 (RGET…LVDA), 496–525 (EEQT…HPDA), 529–558 (NGYT…AHSL), 562–591 (KGFT…AADS), 595–624 (NGLT…SPHA), 628–657 (NGYT…ETNI), 661–690 (QGVT…NIHM), 694–723 (SGLT…DQDA), 727–756 (LGYT…NVNA), 760–789 (NGYT…KPNA), and 793–822 (NGNT…EVTT). A phosphoserine mark is found at S31 and S34. Y378 is modified (phosphotyrosine). Y531 carries the post-translational modification Phosphotyrosine. A Phosphoserine modification is found at S846. T853 is modified (phosphothreonine). The residue at position 874 (S874) is a Phosphoserine. The interval 966 to 1125 (SGFLVSFMVD…ELNEILNGMD (160 aa)) is interaction with SPTBN1. 2 ZU5 domains span residues 968–1156 (FLVS…VVSR) and 1158–1304 (KQDS…LIDC). The tract at residues 1289-1423 (VSFTTNVSAR…FVKVRDTTQE (135 aa)) is UPA domain. At Y1382 the chain carries Phosphotyrosine. A Death 1 domain is found at 1450–1535 (ITLPIYTKES…SDKAGSIKVK (86 aa)). Residues 1457–1486 (KESESDQEQEEEIDMTSEKNDETESTETSV) are disordered. Phosphoserine is present on residues S1459, S1461, S1473, S1500, and S1596. Residues 1461–1471 (SDQEQEEEIDM) are compositionally biased toward acidic residues. Disordered regions lie at residues 1670–2137 (AVGR…TDFS), 2197–2411 (ALDG…GLEL), 2430–2484 (AVSH…GIFP), 2507–2586 (SRLL…TPEE), 2604–2852 (EAKQ…SLPH), 2864–2904 (DISA…TDRF), and 2923–2951 (QITS…ANHT). Basic and acidic residues-rich tracts occupy residues 1674-1683 (SSEKEGKDIP) and 1711-1733 (KQKQ…KGSS). 3 positions are modified to phosphoserine: S1732, S1733, and S1736. Over residues 1766 to 1783 (IKDKVKALQKRVEDEQKG) the composition is skewed to basic and acidic residues. 7 Repeat A repeats span residues 1806 to 1817 (HPAASPSLKSER), 1818 to 1829 (HAPGSPSPKTER), 1830 to 1841 (HSTLSSSAKTER), 1842 to 1853 (HPPVSPSSKTEK), 1854 to 1865 (HSPVSPSAKTER), 1866 to 1877 (HSPASSSSKTEK), and 1878 to 1889 (HSPVSPSTKTER). A repeat-rich region region spans residues 1806–1983 (HPAASPSLKS…PVSPTSKTER (178 aa)). Phosphoserine is present on residues S1855 and S1858. 2 stretches are compositionally biased toward basic and acidic residues: residues 1886–1902 (KTER…ERHP) and 1921–1937 (RTEK…EKRL). The Repeat A; approximate repeat unit spans residues 1890–1900 (HSPVSSTKTER). Repeat A repeat units follow at residues 1901 to 1912 (HPPVSPSGKTDK) and 1913 to 1924 (RPPVSPSGRTEK). Residues 1925–1935 (HPPVSPGRTEK) form a Repeat A; approximate repeat. S1929 is modified (phosphoserine). Repeat A repeat units follow at residues 1936 to 1947 (RLPVSPSGRTDK), 1948 to 1959 (HQPVSTAGKTEK), 1960 to 1971 (HLPVSPSGKTEK), and 1972 to 1983 (QPPVSPTSKTER). 4 stretches are compositionally biased toward basic and acidic residues: residues 1980–1994 (KTER…RELM), 2003–2034 (PSKH…KEKG), 2075–2093 (VKKE…HKIP), and 2102–2117 (EESH…KMAD). A Phosphoserine modification is found at S2127. Residues 2128 to 2137 (PDRKTSTDFS) show a composition bias toward basic and acidic residues. Phosphothreonine is present on T2239. Over residues 2240-2251 (PETSPESLSFSP) the composition is skewed to polar residues. S2243 is modified (phosphoserine). A compositionally biased stretch (basic and acidic residues) spans 2252–2282 (KKSEEQTGETKESTKTETTTEIRSEKEHPTT). The residue at position 2269 (T2269) is a Phosphothreonine. S2275 is modified (phosphoserine). Positions 2355–2376 (TFGSSAHKTQTDSEVQESTATS) are enriched in polar residues. Residues S2405, S2440, S2454, S2516, and S2521 each carry the phosphoserine modification. Over residues 2523 to 2545 (EQTSLMESSGKSPLSPDTPSSEE) the composition is skewed to polar residues. 2 stretches are compositionally biased toward basic and acidic residues: residues 2576-2586 (NGEKKRFTPEE) and 2604-2619 (EAKQ…KQEE). Position 2583 is a phosphothreonine (T2583). Phosphoserine occurs at positions 2679 and 2701. The segment covering 2696–2705 (PSSMDSNSSP) has biased composition (low complexity). A compositionally biased stretch (basic and acidic residues) spans 2729-2776 (EPGKSEEEKDSESHLAEDRHAVSTEAEDRSYDKLNRDTDQPKICDGHG). Phosphoserine is present on residues S2781 and S2795. The span at 2781–2791 (SPSSSAAPVSS) shows a compositional bias: low complexity. Residues 2892 to 2903 (SQDSSITTQTDR) show a composition bias toward polar residues. S2956 is modified (phosphoserine). 3 disordered regions span residues 2987 to 3016 (NFEG…SSFE), 3069 to 3099 (LMVD…SEQN), and 3136 to 3462 (QESR…PTKE). Positions 2998-3016 (QQESTLWEMQSDSVSSSFE) are enriched in polar residues. Phosphoserine is present on S3075. T3078 is subject to Phosphothreonine. Low complexity predominate over residues 3078–3087 (TTPDTTPART). The segment covering 3090-3099 (EEGTPTSEQN) has biased composition (polar residues). Positions 3137–3149 (ESREETLSEDVKE) are enriched in basic and acidic residues. Residues 3157–3169 (LPLETSAESLALS) are compositionally biased toward low complexity. A compositionally biased stretch (acidic residues) spans 3175-3194 (VDDEADLLPDDVSEEVEEIP). Composition is skewed to polar residues over residues 3198 to 3212 (AQLN…STET) and 3256 to 3265 (LDFSTLTRSV). A phosphoserine mark is found at S3273, S3276, and S3277. Basic and acidic residues predominate over residues 3335–3344 (EENKADEAKP). A compositionally biased stretch (polar residues) spans 3357 to 3374 (VEQQLSDLDTSVQKTVAP). Phosphoserine is present on residues S3390 and S3409. Positions 3409–3423 (SYTETETESRERAEE) are enriched in basic and acidic residues. The segment covering 3446–3460 (SRSTTSSCRGGTSPT) has biased composition (low complexity). Phosphoserine is present on S3474. Residues 3569–3653 (IEERLAYIAD…DIVHLMETNT (85 aa)) enclose the Death 2 domain. S3735 bears the Phosphoserine mark. Phosphothreonine occurs at positions 3776, 3797, 3803, and 3814. The tract at residues 3777–3858 (PGTETSETQK…VESADNQPET (82 aa)) is disordered. At S3823 the chain carries Phosphoserine. Over residues 3832-3841 (PSEHREESSP) the composition is skewed to basic and acidic residues. At S3909 the chain carries Phosphoserine.

In terms of assembly, interacts with RHBG and SPTBN1. Colocalizes with Na/K ATPase, Na/Ca exchanger and SPTBN1. Directly interacts with DMD; this interaction is necessary for DMD localization at the sarcolemma. Interacts with DCTN4; this interaction is required for DCTN4 retention at costameres. Identified in complexes that contain VIM, EZR, AHNAK, BFSP1, BFSP2, ANK2, PLEC, PRX and spectrin. Interacts (via death domain) with RABGAP1L (via Rab-GAP TBC domain). Phosphorylated at multiple sites by different protein kinases and each phosphorylation event regulates the protein's structure and function. As to expression, present in plasma membrane of neurons as well as glial cells throughout the brain. Expressed in fetal brain and in temporal cortex of adult brain. Also expressed in the inner segments of rod photoreceptors in retina.

Its subcellular location is the cytoplasm. It localises to the cytoskeleton. It is found in the membrane. The protein localises to the myofibril. The protein resides in the sarcomere. Its subcellular location is the m line. It localises to the apical cell membrane. It is found in the cell membrane. The protein localises to the postsynaptic cell membrane. The protein resides in the early endosome. Its subcellular location is the recycling endosome. It localises to the lysosome. It is found in the mitochondrion. The protein localises to the z line. The protein resides in the sarcolemma. Its subcellular location is the T-tubule. Plays an essential role in the localization and membrane stabilization of ion transporters and ion channels in several cell types, including cardiomyocytes, as well as in striated muscle cells. In skeletal muscle, required for proper localization of DMD and DCTN4 and for the formation and/or stability of a special subset of microtubules associated with costameres and neuromuscular junctions. In cardiomyocytes, required for coordinate assembly of Na/Ca exchanger, SLC8A1/NCX1, Na/K ATPases ATP1A1 and ATP1A2 and inositol 1,4,5-trisphosphate (InsP3) receptors at sarcoplasmic reticulum/sarcolemma sites. Required for expression and targeting of SPTBN1 in neonatal cardiomyocytes and for the regulation of neonatal cardiomyocyte contraction rate. In the inner segment of rod photoreceptors, required for the coordinated expression of the Na/K ATPase, Na/Ca exchanger and beta-2-spectrin (SPTBN1). Plays a role in endocytosis and intracellular protein transport. Associates with phosphatidylinositol 3-phosphate (PI3P)-positive organelles and binds dynactin to promote long-range motility of cells. Recruits RABGAP1L to (PI3P)-positive early endosomes, where RABGAP1L inactivates RAB22A, and promotes polarized trafficking to the leading edge of the migrating cells. Part of the ANK2/RABGAP1L complex which is required for the polarized recycling of fibronectin receptor ITGA5 ITGB1 to the plasma membrane that enables continuous directional cell migration. The protein is Ankyrin-2 (ANK2) of Homo sapiens (Human).